Consider the following 370-residue polypeptide: Formate dehydrogenase (370 aa).

Ile-94 and Asn-120 together coordinate substrate. NAD(+)-binding positions include 175-176 (RI), Asp-196, 231-235 (PLHES), Thr-257, Asp-283, and 312-315 (HMSG).

This sequence belongs to the D-isomer specific 2-hydroxyacid dehydrogenase family. FDH subfamily. In terms of assembly, homodimer.

Its subcellular location is the cytoplasm. It catalyses the reaction formate + NAD(+) = CO2 + NADH. Functionally, catalyzes the NAD(+)-dependent oxidation of formate to carbon dioxide. Formate oxidation is the final step in the methanol oxidation pathway in methylotrophic microorganisms. Has a role in the detoxification of exogenous formate in non-methylotrophic organisms. The protein is Formate dehydrogenase of Chaetomium thermophilum (strain DSM 1495 / CBS 144.50 / IMI 039719) (Thermochaetoides thermophila).